A 327-amino-acid chain; its full sequence is Acyl-CoA desaturase (327 aa).

Residues 1 to 39 (MPDREIKSPIWHPEPGTVEDVFDHTYKEKEGPKPPTVIV) lie on the Cytoplasmic side of the membrane. Residues 40 to 60 (WRNVILMSLLHLGALYGLFLF) traverse the membrane as a helical segment. Residue N42 participates in substrate binding. The Lumenal segment spans residues 61-64 (PSAR). Residues 65–85 (ALTWIWFFGCLLFSALGITAG) traverse the membrane as a helical segment. The Cytoplasmic segment spans residues 86-184 (AHRLWSHRSY…DKVVMFQRRF (99 aa)). H87 and H92 together coordinate Fe cation. Residues 87–92 (HRLWSH) carry the Histidine box-1 motif. Positions 115, 122, and 123 each coordinate substrate. Fe cation contacts are provided by H124, H127, and H128. A Histidine box-2 motif is present at residues 124 to 128 (HRVHH). Substrate contacts are provided by R155 and K156. Residues 185–204 (YKPSVLLMCFFVPTFVPWYV) form a helical membrane-spanning segment. The Lumenal portion of the chain corresponds to 205–208 (WGES). A helical transmembrane segment spans residues 209–230 (LWVAYFVPALLRYALVLNATWL). W229 contacts substrate. Residues 231–327 (VNSAAHMWGN…RTGDGSHWSG (97 aa)) lie on the Cytoplasmic side of the membrane. Residues H236, H265, H268, and H269 each coordinate Fe cation. The Histidine box-3 motif lies at 265–269 (HNYHH).

Belongs to the fatty acid desaturase type 1 family. It depends on Fe(2+) as a cofactor.

It is found in the endoplasmic reticulum membrane. It catalyses the reaction octadecanoyl-CoA + 2 Fe(II)-[cytochrome b5] + O2 + 2 H(+) = (9Z)-octadecenoyl-CoA + 2 Fe(III)-[cytochrome b5] + 2 H2O. Its function is as follows. Stearoyl-CoA desaturase that utilizes O(2) and electrons from reduced cytochrome b5 to introduce the first double bond into saturated fatty acyl-CoA substrates. Has high specificity and catalyzes the insertion of a cis double bond at the delta-9 position into fatty acyl-CoA substrates including palmitoyl-CoA and stearoyl-CoA. Contributes to the biosynthesis of membrane phospholipids, cholesterol esters and triglycerides. This Cyprinus carpio (Common carp) protein is Acyl-CoA desaturase.